The sequence spans 1501 residues: 1-phosphatidylinositol 4,5-bisphosphate phosphodiesterase eta-2 (1501 aa).

The disordered stretch occupies residues 28-47 (RGFSGLQGGRRRGRGEKGIP). The tract at residues 75–229 (MPGPQPSAAS…WVTGLRYLMA (155 aa)) is necessary for plasma membrane localization. Residues 121 to 229 (SAMQEGTQMV…WVTGLRYLMA (109 aa)) form the PH domain. EF-hand domains follow at residues 243–278 (TRDQ…LNVN) and 279–315 (LPRQ…MSTR). Ca(2+)-binding residues include Asp256, Asn258, Asp260, Ser262, and Glu267. The 146-residue stretch at 400–545 (QDMTQPLSHY…LKGKILVKGK (146 aa)) folds into the PI-PLC X-box domain. The active site involves His415. Residues Asn416, Glu445, and Asp447 each coordinate Ca(2+). Residue His459 is part of the active site. Glu494 contributes to the Ca(2+) binding site. 2 residues coordinate substrate: Lys543 and Lys545. Disordered stretches follow at residues 551–570 (ISED…DEME) and 609–700 (DPND…QKKT). Residues 553–570 (EDAEEGEVSDEDSADEME) are compositionally biased toward acidic residues. 2 positions are modified to phosphoserine: Ser561 and Ser565. A compositionally biased stretch (basic and acidic residues) spans 626–638 (RKAEAKKGQSKVE). Positions 662–673 (SKRKKKGSKIKK) are enriched in basic residues. Phosphoserine occurs at positions 676 and 686. One can recognise a PI-PLC Y-box domain in the interval 707–821 (LSDLVKYTKS…GYVLKPQCMC (115 aa)). Residues Ser734 and Arg761 each coordinate substrate. One can recognise a C2 domain in the interval 821-950 (CQGVFNPNSE…PGYRHVYLEG (130 aa)). Ile865, Asp867, Asp891, Asp920, His921, and Asp922 together coordinate Ca(2+). Disordered stretches follow at residues 986–1073 (GSLD…RLFP), 1089–1238 (EEPA…SSND), 1273–1305 (SAAR…DELQ), and 1398–1469 (GDIT…GACS). Residues 1089–1107 (EEPALGPGLPLQAAAPTGP) show a composition bias toward low complexity. Composition is skewed to basic and acidic residues over residues 1142–1151 (GGRENEEPPL) and 1215–1227 (LWQR…HRDS). Over residues 1421-1439 (RRSSSRSQSRVRAIASRAR) the composition is skewed to low complexity. Over residues 1440-1463 (QAQERQQRLRGQDSRGPPEEERGT) the composition is skewed to basic and acidic residues.

Ca(2+) serves as cofactor. Specifically detected in the brain, with higher level in cerebral cortex, olfactory bulb and hippocampus (at protein level). Expressed in the pyramidal cells of the hippocampus, but also in eye and lung.

It localises to the cytoplasm. The protein localises to the cell membrane. It catalyses the reaction a 1,2-diacyl-sn-glycero-3-phospho-(1D-myo-inositol-4,5-bisphosphate) + H2O = 1D-myo-inositol 1,4,5-trisphosphate + a 1,2-diacyl-sn-glycerol + H(+). Activity is stimulated by GNB1:GNG2. In terms of biological role, the production of the second messenger molecules diacylglycerol (DAG) and inositol 1,4,5-trisphosphate (IP3) is mediated by activated phosphatidylinositol-specific phospholipase C enzymes. This phospholipase activity is very sensitive to calcium. May be important for formation and maintenance of the neuronal network in the postnatal brain. In Mus musculus (Mouse), this protein is 1-phosphatidylinositol 4,5-bisphosphate phosphodiesterase eta-2.